A 101-amino-acid chain; its full sequence is UPF0473 protein MGAS10750_Spy1887 (101 aa).

Belongs to the UPF0473 family.

The protein is UPF0473 protein MGAS10750_Spy1887 of Streptococcus pyogenes serotype M4 (strain MGAS10750).